The primary structure comprises 608 residues: Growth hormone receptor (608 aa).

The first 16 residues, 1–16, serve as a signal peptide directing secretion; the sequence is MDLRHLLFTLALVCAN. Over 17–237 the chain is Extracellular; that stretch reads DSLSASDDLL…EFVHCAEEIE (221 aa). Disulfide bonds link C34–C44 and C72–C83. The N-linked (GlcNAc...) asparagine glycan is linked to N86. C97 and C111 are joined by a disulfide. The region spanning 122-226 is the Fibronectin type-III domain; the sequence is PPVHLNWTLL…ILYVSFTQAG (105 aa). N127, N132, and N171 each carry an N-linked (GlcNAc...) asparagine glycan. The short motif at 211–215 is the WSXWS motif element; that stretch reads FGEFS. A helical membrane pass occupies residues 238–261; sequence FPWFLVVVFGVCGLAVTAILILLS. Over 262–608 the chain is Cytoplasmic; sequence KQPRLKMLIF…STDQLNKIMP (347 aa). The interval 267–352 is required for JAK2 binding; the sequence is KMLIFPPVPV…HLKSHSCLGA (86 aa). The Box 1 motif motif lies at 270–278; sequence IFPPVPVPK. The short motif at 313–322 is the UbE motif element; sequence DLWVEFIELD. Polar residues-rich tracts occupy residues 413 to 426 and 438 to 451; these read ANTD…STQS and STDS…TQLS. A disordered region spans residues 413-451; sequence ANTDTQQPHTSTQSESRESWPPFADSTDSANPSVQTQLS.

Belongs to the type I cytokine receptor family. Type 1 subfamily. In terms of processing, on GH binding, proteolytically cleaved, in vitro, to produce GHBP. Broad specificity.

It localises to the cell membrane. Its subcellular location is the secreted. Its function is as follows. Receptor for pituitary gland growth hormone (GH1) involved in regulating postnatal body growth. On ligand binding, couples to the JAK2/STAT5 pathway. The soluble form (GHBP) acts as a reservoir of growth hormone in plasma and may be a modulator/inhibitor of GH signaling. In Gallus gallus (Chicken), this protein is Growth hormone receptor (GHR).